A 433-amino-acid polypeptide reads, in one-letter code: Trigger factor (433 aa).

In terms of domain architecture, PPIase FKBP-type spans 161 to 246 (EDRVVIDFVG…LKKVENIVLP (86 aa)).

It belongs to the FKBP-type PPIase family. Tig subfamily.

Its subcellular location is the cytoplasm. The enzyme catalyses [protein]-peptidylproline (omega=180) = [protein]-peptidylproline (omega=0). In terms of biological role, involved in protein export. Acts as a chaperone by maintaining the newly synthesized protein in an open conformation. Functions as a peptidyl-prolyl cis-trans isomerase. In Actinobacillus pleuropneumoniae serotype 7 (strain AP76), this protein is Trigger factor.